Here is a 317-residue protein sequence, read N- to C-terminus: TPR repeat-containing thioredoxin TDX (317 aa).

Residues 1 to 48 are disordered; the sequence is MATAGASSFEDEIMESDIELEGEAVEPDNDPPQKMGDPSVEVSDEKRD. Over residues 9-29 the composition is skewed to acidic residues; that stretch reads FEDEIMESDIELEGEAVEPDN. 3 TPR repeats span residues 50–83, 85–117, and 119–151; these read AQLC…NPTS, IAYA…NPDS, and KGYK…DYDE. Residues 189–316 form the Thioredoxin domain; that stretch reads EKQRKHAEEV…LERKVAQHGS (128 aa). Residues cysteine 242 and cysteine 245 each act as nucleophile in the active site. Cysteine 242 and cysteine 245 are disulfide-bonded.

Belongs to the thioredoxin family.

In terms of biological role, probable thiol-disulfide oxidoreductase that may participate in various redox reactions and act as chaperone under heat shock. May interact with HSP70 proteins through the TPR repeats. The chain is TPR repeat-containing thioredoxin TDX from Oryza sativa subsp. japonica (Rice).